We begin with the raw amino-acid sequence, 142 residues long: Ig heavy chain V region IR2 (142 aa).

Residues 1-19 form the signal peptide; it reads MDLRLTYVFIVAILKGVLC. Residues 20–133 enclose the Ig-like domain; that stretch reads EVKLEESGGG…YSENWFVYWG (114 aa).

The polypeptide is Ig heavy chain V region IR2 (Rattus norvegicus (Rat)).